The chain runs to 866 residues: Transcription factor E2F8 (866 aa).

Residues serine 71 and serine 102 each carry the phosphoserine modification. 2 consecutive DNA-binding regions follow at residues 113 to 182 (RKEK…TWHG) and 261 to 347 (RKDK…KWTG). Disordered stretches follow at residues 409 to 429 (RKINSAPSSPIKTHKAESTQN), 532 to 632 (TITP…STTL), and 794 to 837 (TNGQ…GSPC). Serine 413 and serine 417 each carry phosphoserine. Residues 543–552 (VCPTTSSNAM) show a composition bias toward polar residues. Composition is skewed to basic and acidic residues over residues 588-603 (QGAKNREREPAREKGS) and 612-624 (SGSKKKFKEDQKA). Positions 794 to 805 (TNGQSFAGTGAQ) are enriched in polar residues. The segment covering 825-834 (TPGGPTKPTG) has biased composition (low complexity).

This sequence belongs to the E2F/DP family. In terms of assembly, homodimer and heterodimer: mainly forms homodimers and, to a lesser extent, heterodimers with E2F8. Dimerization is important for DNA-binding. Interacts with HIF1A.

It localises to the nucleus. In terms of biological role, atypical E2F transcription factor that participates in various processes such as angiogenesis and polyploidization of specialized cells. Mainly acts as a transcription repressor that binds DNA independently of DP proteins and specifically recognizes the E2 recognition site 5'-TTTC[CG]CGC-3'. Directly represses transcription of classical E2F transcription factors such as E2F1: component of a feedback loop in S phase by repressing the expression of E2F1, thereby preventing p53/TP53-dependent apoptosis. Plays a key role in polyploidization of cells in placenta and liver by regulating the endocycle, probably by repressing genes promoting cytokinesis and antagonizing action of classical E2F proteins (E2F1, E2F2 and/or E2F3). Required for placental development by promoting polyploidization of trophoblast giant cells. Acts as a promoter of sprouting angiogenesis, possibly by acting as a transcription activator: associates with HIF1A, recognizes and binds the VEGFA promoter, which is different from canonical E2 recognition site, and activates expression of the VEGFA gene. In Bos taurus (Bovine), this protein is Transcription factor E2F8 (E2F8).